A 378-amino-acid polypeptide reads, in one-letter code: Fructose-1,6-bisphosphatase class 1 2 (378 aa).

Mg(2+)-binding residues include Glu-98, Asp-120, Leu-122, and Asp-123. Substrate is bound by residues 123 to 126 (DGSS) and Asn-227. Glu-299 is a Mg(2+) binding site.

The protein belongs to the FBPase class 1 family. As to quaternary structure, homotetramer. The cofactor is Mg(2+).

The protein resides in the cytoplasm. It catalyses the reaction beta-D-fructose 1,6-bisphosphate + H2O = beta-D-fructose 6-phosphate + phosphate. It functions in the pathway carbohydrate biosynthesis; gluconeogenesis. This is Fructose-1,6-bisphosphatase class 1 2 from Paraburkholderia xenovorans (strain LB400).